Here is a 239-residue protein sequence, read N- to C-terminus: MNKNEELDEDELLKKCIICPPVPKALKKYWNNRYNLFSRFDEGIWLDYQSWYSVTPEKVAVAIAKSVVDFIQPELIIDAFSGCGGNTIQFAKYCPVISIEIDPIKIAMAKHNLEIYGIPSSRVTFIQGDVLDTFKSLQFAKDYRSLVFMSPPWGGPSYSGKTVYSLNDLNPYAFDVLFKEATRISPYVAAFLPRNTDVKELAAYGSIHNKPYITNFLFEGYAKAICCYFNMKGAIARKI.

Belongs to the methyltransferase superfamily. Trimethylguanosine synthase family. As to quaternary structure, monomer. Interacts with mug174; both proteins are required to maintain Cajal body integrity.

It localises to the nucleus. The protein resides in the cajal body. It catalyses the reaction a 5'-end (N(7)-methyl 5'-triphosphoguanosine)-ribonucleoside in snRNA + S-adenosyl-L-methionine = a 5'-end (N(2),N(7)-dimethyl 5'-triphosphoguanosine)-ribonucleoside in snRNA + S-adenosyl-L-homocysteine + H(+). The enzyme catalyses a 5'-end (N(7)-methyl 5'-triphosphoguanosine)-ribonucleoside in snoRNA + S-adenosyl-L-methionine = a 5'-end (N(2),N(7)-dimethyl 5'-triphosphoguanosine)-ribonucleoside in snoRNA + S-adenosyl-L-homocysteine + H(+). The catalysed reaction is a 5'-end (N(2),N(7)-dimethyl 5'-triphosphoguanosine)-ribonucleoside in snRNA + S-adenosyl-L-methionine = a 5'-end (N(2),N(2),N(7)-trimethyl 5'-triphosphoguanosine)-ribonucleoside in snRNA + S-adenosyl-L-homocysteine + H(+). It carries out the reaction a 5'-end (N(2),N(7)-dimethyl 5'-triphosphoguanosine)-ribonucleoside in snoRNA + S-adenosyl-L-methionine = a 5'-end (N(2),N(2),N(7)-trimethyl 5'-triphosphoguanosine)-ribonucleoside in snoRNA + S-adenosyl-L-homocysteine + H(+). Substrate inhibited by S-adenosyl-L-homocysteine. Functionally, catalyzes the two serial methylation steps for the conversion of the 7-monomethylguanosine (m(7)G) caps of snRNAs and snoRNAs to a 2,2,7-trimethylguanosine (m(2,2,7)G) cap structure. The enzyme is specific for guanine, and N7 methylation must precede N2 methylation. Required for pre-mRNA splicing, pre-rRNA processing and small ribosomal subunit synthesis. Involved in nucleolar structural organization. This is Trimethylguanosine synthase (tgs1) from Schizosaccharomyces pombe (strain 972 / ATCC 24843) (Fission yeast).